Consider the following 688-residue polypeptide: Glycine--tRNA ligase beta subunit (688 aa).

The protein belongs to the class-II aminoacyl-tRNA synthetase family. Tetramer of two alpha and two beta subunits.

It is found in the cytoplasm. The catalysed reaction is tRNA(Gly) + glycine + ATP = glycyl-tRNA(Gly) + AMP + diphosphate. The chain is Glycine--tRNA ligase beta subunit from Aliivibrio salmonicida (strain LFI1238) (Vibrio salmonicida (strain LFI1238)).